A 206-amino-acid polypeptide reads, in one-letter code: Protein-methionine-sulfoxide reductase heme-binding subunit MsrQ (206 aa).

A run of 6 helical transmembrane segments spans residues 14–34, 45–65, 82–102, 118–138, 149–169, and 179–199; these read IKPLLFVAGLLPFARWFWLGA, FLTRSSGTWTLVCLLVTLAIT, MCGLFAFFYGSLHFLAWVWWD, PFITVGFAAFVLMAALAATST, WQTLHRAVYAIGLLAILHFWW, and QPLLYGSVLALLLGWRVAAWW.

This sequence belongs to the MsrQ family. Heterodimer of a catalytic subunit (MsrP) and a heme-binding subunit (MsrQ). FMN serves as cofactor. Heme b is required as a cofactor.

It is found in the cell inner membrane. In terms of biological role, part of the MsrPQ system that repairs oxidized periplasmic proteins containing methionine sulfoxide residues (Met-O), using respiratory chain electrons. Thus protects these proteins from oxidative-stress damage caused by reactive species of oxygen and chlorine generated by the host defense mechanisms. MsrPQ is essential for the maintenance of envelope integrity under bleach stress, rescuing a wide series of structurally unrelated periplasmic proteins from methionine oxidation. MsrQ provides electrons for reduction to the reductase catalytic subunit MsrP, using the quinone pool of the respiratory chain. In Bordetella pertussis (strain Tohama I / ATCC BAA-589 / NCTC 13251), this protein is Protein-methionine-sulfoxide reductase heme-binding subunit MsrQ.